Here is a 600-residue protein sequence, read N- to C-terminus: Elongation factor 4 (600 aa).

A tr-type G domain is found at 5–187 (SNIRNFSIIA…ALVERIPAPT (183 aa)). GTP is bound by residues 17–22 (DHGKST) and 134–137 (NKID).

It belongs to the TRAFAC class translation factor GTPase superfamily. Classic translation factor GTPase family. LepA subfamily.

Its subcellular location is the cell inner membrane. It catalyses the reaction GTP + H2O = GDP + phosphate + H(+). Required for accurate and efficient protein synthesis under certain stress conditions. May act as a fidelity factor of the translation reaction, by catalyzing a one-codon backward translocation of tRNAs on improperly translocated ribosomes. Back-translocation proceeds from a post-translocation (POST) complex to a pre-translocation (PRE) complex, thus giving elongation factor G a second chance to translocate the tRNAs correctly. Binds to ribosomes in a GTP-dependent manner. The protein is Elongation factor 4 of Psychrobacter sp. (strain PRwf-1).